The primary structure comprises 673 residues: DNA ligase (673 aa).

Residues 38–42 (DSVYD), 87–88 (SL), and Glu-119 each bind NAD(+). Catalysis depends on Lys-121, which acts as the N6-AMP-lysine intermediate. The NAD(+) site is built by Arg-142, Glu-179, Lys-296, and Lys-320. Zn(2+) is bound by residues Cys-414, Cys-417, Cys-432, and Cys-438. The 79-residue stretch at 595-673 (VVKSEIAGKT…EEAFLKLLKS (79 aa)) folds into the BRCT domain.

It belongs to the NAD-dependent DNA ligase family. LigA subfamily. Mg(2+) is required as a cofactor. Requires Mn(2+) as cofactor.

It catalyses the reaction NAD(+) + (deoxyribonucleotide)n-3'-hydroxyl + 5'-phospho-(deoxyribonucleotide)m = (deoxyribonucleotide)n+m + AMP + beta-nicotinamide D-nucleotide.. Its function is as follows. DNA ligase that catalyzes the formation of phosphodiester linkages between 5'-phosphoryl and 3'-hydroxyl groups in double-stranded DNA using NAD as a coenzyme and as the energy source for the reaction. It is essential for DNA replication and repair of damaged DNA. The polypeptide is DNA ligase (Coxiella burnetii (strain RSA 493 / Nine Mile phase I)).